The sequence spans 335 residues: Glyceraldehyde-3-phosphate dehydrogenase (335 aa).

NAD(+)-binding positions include 15 to 16 (RI) and Asp37. D-glyceraldehyde 3-phosphate contacts are provided by residues 155-157 (SCT), Thr186, Arg201, 214-215 (TG), and Arg237. The active-site Nucleophile is Cys156. The NAD(+) site is built by Gln301 and Asn318.

It belongs to the glyceraldehyde-3-phosphate dehydrogenase family. As to quaternary structure, homotetramer.

The protein localises to the cytoplasm. The enzyme catalyses D-glyceraldehyde 3-phosphate + phosphate + NADP(+) = (2R)-3-phospho-glyceroyl phosphate + NADPH + H(+). It catalyses the reaction D-glyceraldehyde 3-phosphate + phosphate + NAD(+) = (2R)-3-phospho-glyceroyl phosphate + NADH + H(+). Its pathway is carbohydrate degradation; glycolysis; pyruvate from D-glyceraldehyde 3-phosphate: step 1/5. The sequence is that of Glyceraldehyde-3-phosphate dehydrogenase (gap) from Haloarcula vallismortis (Halobacterium vallismortis).